The primary structure comprises 115 residues: Transmembrane protein 218 (115 aa).

A run of 3 helical transmembrane segments spans residues valine 5–leucine 25, phenylalanine 38–proline 58, and tyrosine 81–histidine 101.

Belongs to the TMEM218 family. In terms of assembly, interacts with TMEM67.

The protein localises to the membrane. The protein resides in the cell projection. It localises to the cilium. In terms of biological role, may be involved in ciliary biogenesis or function. The sequence is that of Transmembrane protein 218 (Tmem218) from Rattus norvegicus (Rat).